A 126-amino-acid polypeptide reads, in one-letter code: Large ribosomal subunit protein bL12 (126 aa).

Belongs to the bacterial ribosomal protein bL12 family. In terms of assembly, homodimer. Part of the ribosomal stalk of the 50S ribosomal subunit. Forms a multimeric L10(L12)X complex, where L10 forms an elongated spine to which 2 to 4 L12 dimers bind in a sequential fashion. Binds GTP-bound translation factors.

In terms of biological role, forms part of the ribosomal stalk which helps the ribosome interact with GTP-bound translation factors. Is thus essential for accurate translation. The protein is Large ribosomal subunit protein bL12 of Tropheryma whipplei (strain TW08/27) (Whipple's bacillus).